Here is a 429-residue protein sequence, read N- to C-terminus: CinA-like protein (429 aa).

It belongs to the CinA family.

This chain is CinA-like protein, found in Prochlorococcus marinus (strain MIT 9313).